The following is a 213-amino-acid chain: Cytochrome c biogenesis ATP-binding export protein CcmA (213 aa).

The 207-residue stretch at 7-213 folds into the ABC transporter domain; sequence LKTKKLACQR…VRLENYKFTE (207 aa). 39–46 provides a ligand contact to ATP; the sequence is GHNGIGKT.

The protein belongs to the ABC transporter superfamily. CcmA exporter (TC 3.A.1.107) family. The complex is composed of two ATP-binding proteins (CcmA) and two transmembrane proteins (CcmB).

The protein resides in the cell inner membrane. The catalysed reaction is heme b(in) + ATP + H2O = heme b(out) + ADP + phosphate + H(+). Part of the ABC transporter complex CcmAB involved in the biogenesis of c-type cytochromes; once thought to export heme, this seems not to be the case, but its exact role is uncertain. Responsible for energy coupling to the transport system. This Pasteurella multocida (strain Pm70) protein is Cytochrome c biogenesis ATP-binding export protein CcmA.